We begin with the raw amino-acid sequence, 846 residues long: Leucine--tRNA ligase (846 aa).

The short motif at P47–H57 is the 'HIGH' region element. The short motif at K621–S625 is the 'KMSKS' region element. Position 624 (K624) interacts with ATP.

The protein belongs to the class-I aminoacyl-tRNA synthetase family.

The protein localises to the cytoplasm. It catalyses the reaction tRNA(Leu) + L-leucine + ATP = L-leucyl-tRNA(Leu) + AMP + diphosphate. The protein is Leucine--tRNA ligase of Zymomonas mobilis subsp. mobilis (strain ATCC 31821 / ZM4 / CP4).